The following is a 273-amino-acid chain: R-spondin-3 (273 aa).

The first 21 residues, 1–21 (MHLRLISWFFIILNFMEYIGS), serve as a signal peptide directing secretion. FU repeat units follow at residues 35–86 (PNVS…GYYG) and 92–135 (INKC…GLEA). N-linked (GlcNAc...) asparagine glycosylation occurs at N36. 11 disulfides stabilise this stretch: C41–C48, C45–C54, C57–C76, C80–C95, C98–C105, C102–C111, C114–C125, C129–C142, C148–C190, C159–C166, and C199–C206. The TSP type-1 domain occupies 147-207 (HCEASEWSPW…KCTVQRKKCP (61 aa)). A disordered region spans residues 201–273 (VQRKKCPKGE…QKSVSVSTVH (73 aa)). Basic residues predominate over residues 213-223 (RKGRERKRKKP). Basic and acidic residues predominate over residues 224–252 (NKEESKDAIPDNKGLEPSRETPEQRENKQ).

The protein belongs to the R-spondin family. As to quaternary structure, interacts with the extracellular domain of FZD8 and LRP6. It however does not form a ternary complex with FZD8 and LRP6. Interacts with WNT1. Binds heparin. Interacts with LGR4, LGR5 and LGR6.

Its subcellular location is the secreted. Activator of the canonical Wnt signaling pathway by acting as a ligand for LGR4-6 receptors, which acts as a key regulator of angiogenesis. Upon binding to LGR4-6 (LGR4, LGR5 or LGR6), LGR4-6 associate with phosphorylated LRP6 and frizzled receptors that are activated by extracellular Wnt receptors, triggering the canonical Wnt signaling pathway to increase expression of target genes. Also regulates the canonical Wnt/beta-catenin-dependent pathway and non-canonical Wnt signaling by acting as an inhibitor of ZNRF3, an important regulator of the Wnt signaling pathway. Acts as a ligand for frizzled FZD8 and LRP6. May negatively regulate the TGF-beta pathway. Acts as a key regulator of angiogenesis by controlling vascular stability and pruning: acts by activating the non-canonical Wnt signaling pathway in endothelial cells. Can also amplify Wnt signaling pathway independently of LGR4-6 receptors, possibly by acting as a direct antagonistic ligand to RNF43 and ZNRF3. The polypeptide is R-spondin-3 (RSPO3) (Bos taurus (Bovine)).